The primary structure comprises 502 residues: Inosine-5'-monophosphate dehydrogenase 2 (502 aa).

Ser2 is subject to N-acetylserine. The CBS domain maps to 166–225 (MKSCENKDYYVPWDIDLDKIEAVLEDKQKGFVVLEKEGETVNVVTKDDVERVKGYPKLGS). NAD(+) contacts are provided by residues 264 to 266 (DSS) and 314 to 316 (GMG). K(+)-binding residues include Gly316 and Gly318. Residue Ser319 coordinates IMP. Cys321 provides a ligand contact to K(+). Cys321 (thioimidate intermediate) is an active-site residue. IMP contacts are provided by residues 354-356 (DGG), 377-378 (GS), and 401-405 (YRGMG). Arg417 acts as the Proton acceptor in catalysis. Gln429 is an IMP binding site. K(+) contacts are provided by Glu488, Gly489, and Gly490.

Belongs to the IMPDH/GMPR family. In terms of assembly, homotetramer. Requires K(+) as cofactor.

It localises to the cytoplasm. It catalyses the reaction IMP + NAD(+) + H2O = XMP + NADH + H(+). The protein operates within purine metabolism; XMP biosynthesis via de novo pathway; XMP from IMP: step 1/1. Its activity is regulated as follows. Mycophenolic acid (MPA) is a non-competitive inhibitor that prevents formation of the closed enzyme conformation by binding to the same site as the amobile flap. In contrast, mizoribine monophosphate (MZP) is a competitive inhibitor that induces the closed conformation. MPA is a potent inhibitor of mammalian IMPDHs but a poor inhibitor of the bacterial enzymes. MZP is a more potent inhibitor of bacterial IMPDH. Functionally, catalyzes the conversion of inosine 5'-phosphate (IMP) to xanthosine 5'-phosphate (XMP), the first committed and rate-limiting step in the de novo synthesis of guanine nucleotides, and therefore plays an important role in the regulation of cell growth. In Arabidopsis thaliana (Mouse-ear cress), this protein is Inosine-5'-monophosphate dehydrogenase 2.